A 231-amino-acid chain; its full sequence is NADH-ubiquinone oxidoreductase chain 4 (231 aa).

6 consecutive transmembrane segments (helical) span residues 1–21, 34–54, 63–85, 89–111, 128–148, and 169–189; these read PIAG…YGII, MFLP…LTCL, IAYS…TPWG, ALAL…NTTY, ILPM…AIPP, and TIIM…HMFL.

It belongs to the complex I subunit 4 family.

The protein resides in the mitochondrion membrane. The catalysed reaction is a ubiquinone + NADH + 5 H(+)(in) = a ubiquinol + NAD(+) + 4 H(+)(out). In terms of biological role, core subunit of the mitochondrial membrane respiratory chain NADH dehydrogenase (Complex I) that is believed to belong to the minimal assembly required for catalysis. Complex I functions in the transfer of electrons from NADH to the respiratory chain. The immediate electron acceptor for the enzyme is believed to be ubiquinone. This Bothrocophias hyoprora (Amazonian hognose viper) protein is NADH-ubiquinone oxidoreductase chain 4 (MT-ND4).